The chain runs to 192 residues: UPF0312 protein Avin_03250 (192 aa).

The first 23 residues, 1 to 23 (MLKKTLAALALGSALLGAGQAMA), serve as a signal peptide directing secretion.

The protein belongs to the UPF0312 family. Type 1 subfamily.

Its subcellular location is the periplasm. This Azotobacter vinelandii (strain DJ / ATCC BAA-1303) protein is UPF0312 protein Avin_03250.